The sequence spans 558 residues: MPAKLNSPSRYHGIYNAPHRAFLRSVGLTDEEIGKPLVAIATAWSEAGPCNFHTLALARVAKEGTKEAGLSPLAFPTMVVNDNIGMGSEGMRYSLVSRDLIADMVEAQFNAHAFDGLVGIGGCDKTTPGILMAMARLNVPSIYIYGGSAEPGYFMGKRLTIEDVHEAIGAYLAKRITENELYEIEKRAHPTLGTCSGLFTANTMGSMSEALGMALPGSASPTATSSRRVMYVRETGKALGSLIENGIKSRDILTFEAFENAITTLMAMGGSTNAVLHLLAIAYEAGVKLTLDDFNRISKRTPYIASMKPGGDYVMADLDEVGGVPVVLKKLLDAGLLHGDVLTVTGKTMKQNLEQYKYPNVPHSHIVRDVKNPIKPRGGIVILKGSLAPEGAVIKVAATNVVKFEGKAKVYNSEDDAFKGVQSGEVREGEVVIIRYEGPKGAPGMPEMLRVTAAIMGAGLNNVALVTDGRFSGATRGPMVGHVAPEAMVGGPIAIVEDGDTIVIDVESERLDLKLSEEEIKNRLKRWSPPSPRYKSGLLAKYASLVSQASMGAVTRPA.

Cys-50 serves as a coordination point for [2Fe-2S] cluster. Asp-82 provides a ligand contact to Mg(2+). A [2Fe-2S] cluster-binding site is contributed by Cys-123. Mg(2+) is bound by residues Asp-124 and Lys-125. Position 125 is an N6-carboxylysine (Lys-125). Residue Cys-195 participates in [2Fe-2S] cluster binding. Position 447 (Glu-447) interacts with Mg(2+). Residue Ser-472 is the Proton acceptor of the active site.

This sequence belongs to the IlvD/Edd family. As to quaternary structure, homodimer. [2Fe-2S] cluster serves as cofactor. Mg(2+) is required as a cofactor.

It carries out the reaction (2R)-2,3-dihydroxy-3-methylbutanoate = 3-methyl-2-oxobutanoate + H2O. The catalysed reaction is (2R,3R)-2,3-dihydroxy-3-methylpentanoate = (S)-3-methyl-2-oxopentanoate + H2O. It functions in the pathway amino-acid biosynthesis; L-isoleucine biosynthesis; L-isoleucine from 2-oxobutanoate: step 3/4. The protein operates within amino-acid biosynthesis; L-valine biosynthesis; L-valine from pyruvate: step 3/4. In terms of biological role, functions in the biosynthesis of branched-chain amino acids. Catalyzes the dehydration of (2R,3R)-2,3-dihydroxy-3-methylpentanoate (2,3-dihydroxy-3-methylvalerate) into 2-oxo-3-methylpentanoate (2-oxo-3-methylvalerate) and of (2R)-2,3-dihydroxy-3-methylbutanoate (2,3-dihydroxyisovalerate) into 2-oxo-3-methylbutanoate (2-oxoisovalerate), the penultimate precursor to L-isoleucine and L-valine, respectively. This is Dihydroxy-acid dehydratase from Saccharolobus islandicus (strain M.16.27) (Sulfolobus islandicus).